Reading from the N-terminus, the 407-residue chain is Probable sodium/metabolite cotransporter BASS5, chloroplastic (407 aa).

The N-terminal 57 residues, 1-57, are a transit peptide targeting the chloroplast; it reads MGVISPTETLFLKSQHRLLQPRNYSYALAFHSTRRVANFPRNSFSSLGSCSVDFPLR. Transmembrane regions (helical) follow at residues 101-121, 122-142, 162-184, 191-213, 222-242, 252-272, 286-306, 317-337, and 379-399; these read FIPH…PSFT, WFKP…VGIN, YIGQ…VSLF, GAGI…TFLT, IVMT…LSLL, VFGM…AGLL, PFLP…PLAL, ATIL…GYFF, and LVGV…VSLV.

Belongs to the bile acid:sodium symporter (BASS) (TC 2.A.28) family. In terms of tissue distribution, widely expressed.

It localises to the membrane. It is found in the plastid. The protein resides in the chloroplast envelope. Plastidic transporter involved in the biosynthesis of aliphatic glucosinolates by translocating the biosynthetic intermediates of Met-derived glucosinolates across chloroplast membranes. Transports short chain (C2) alpha-keto acids, such as 4-methylsulfanyl-2-oxobutanoic acid, from the cytosol to the chloroplast where they are subjected to chain elongation cycles. Also functions in the transport of chain-elongated (C3 to C8) Met derivatives from the chloroplast to the cytosol. Does not seem to be involved in the transport of indole-derived glucosinolates. The protein is Probable sodium/metabolite cotransporter BASS5, chloroplastic (BASS5) of Arabidopsis thaliana (Mouse-ear cress).